A 144-amino-acid polypeptide reads, in one-letter code: Transcription antitermination protein NusB (144 aa).

The protein belongs to the NusB family.

Involved in transcription antitermination. Required for transcription of ribosomal RNA (rRNA) genes. Binds specifically to the boxA antiterminator sequence of the ribosomal RNA (rrn) operons. In Dictyoglomus turgidum (strain DSM 6724 / Z-1310), this protein is Transcription antitermination protein NusB.